The primary structure comprises 102 residues: Small ribosomal subunit protein uS10 (102 aa).

Belongs to the universal ribosomal protein uS10 family. In terms of assembly, part of the 30S ribosomal subunit.

Its function is as follows. Involved in the binding of tRNA to the ribosomes. This Lactobacillus gasseri (strain ATCC 33323 / DSM 20243 / BCRC 14619 / CIP 102991 / JCM 1131 / KCTC 3163 / NCIMB 11718 / NCTC 13722 / AM63) protein is Small ribosomal subunit protein uS10.